Reading from the N-terminus, the 85-residue chain is Large ribosomal subunit protein bL27 (85 aa).

A disordered region spans residues 1-22; that stretch reads MAHKKGVGSTRNGRDSESKRLG.

Belongs to the bacterial ribosomal protein bL27 family.

In Geobacter metallireducens (strain ATCC 53774 / DSM 7210 / GS-15), this protein is Large ribosomal subunit protein bL27.